A 420-amino-acid polypeptide reads, in one-letter code: Histidine--tRNA ligase, chloroplastic (420 aa).

Belongs to the class-II aminoacyl-tRNA synthetase family.

The protein resides in the plastid. The protein localises to the chloroplast. It catalyses the reaction tRNA(His) + L-histidine + ATP = L-histidyl-tRNA(His) + AMP + diphosphate + H(+). The polypeptide is Histidine--tRNA ligase, chloroplastic (Gracilaria tenuistipitata var. liui (Red alga)).